The primary structure comprises 2462 residues: Serine/threonine-protein kinase Wnk (2462 aa).

3 disordered regions span residues 18–133 (NRAR…ASKS), 146–248 (NTLP…KSSS), and 365–461 (EDDV…DDDP). Polar residues-rich tracts occupy residues 29-58 (DGTT…NIQK) and 65-78 (NRSA…NPTS). Low complexity predominate over residues 94 to 124 (TLSAHTSTSSTTSIQSSPIEPASSLPTLNTT). Positions 146 to 155 (NTLPGKTASS) are enriched in polar residues. Basic and acidic residues-rich tracts occupy residues 190-205 (QSRE…KIEP), 237-247 (DTKKMEARKSS), and 396-413 (QSEK…KAES). Over residues 414 to 452 (SEASAEEAAVTGSSTDASASPLPSTSLVSTTSSATSITK) the composition is skewed to low complexity. One can recognise a Protein kinase domain in the interval 471-729 (FKYDKEVGRG…CNELLESEFF (259 aa)). Residues Ser481, 551-554 (TELM), and Lys601 each bind ATP. The active-site Proton acceptor is Asp618. Ser628 and Ser632 each carry phosphoserine; by autocatalysis. Disordered stretches follow at residues 844 to 873 (LQKQ…DGVK), 893 to 923 (LALS…QPVQ), and 1006 to 1055 (PQQQ…LQQQ). Acidic residues predominate over residues 855–870 (VDEDEEEEEESEDEED). Over residues 893-918 (LALSTNSVEPQQLSTRSNTSIPNSGI) the composition is skewed to polar residues. Composition is skewed to low complexity over residues 1006–1034 (PQQQ…QPQT) and 1041–1055 (HEQQ…LQQQ). The stretch at 1142-1178 (AQHQLQQLQQQQLQQQQLQQQQQIQQQQLQQQQLQQQ) forms a coiled coil. A compositionally biased stretch (polar residues) spans 1236 to 1251 (QGGQVTLSDAQQQQHP). Disordered stretches follow at residues 1236-1256 (QGGQ…FSAV), 1322-1382 (QQQQ…EQIS), 1418-1465 (GALE…PKLS), 1554-1578 (LTRQ…SDIT), 1615-1699 (NIPN…KDKK), 1762-1790 (DTSE…GNQG), 1828-1895 (QASP…SVGS), 1929-1966 (HEKQ…SINQ), and 2122-2229 (THVQ…FIQS). Basic residues predominate over residues 1559 to 1568 (STFRSHQRHR). Positions 1627-1641 (STPPTTTSTMSSSST) are enriched in low complexity. Positions 1642 to 1674 (ASRDAPNSSNDVTIGSGSVSRKTSTASEYTSLS) are enriched in polar residues. Polar residues-rich tracts occupy residues 1828 to 1852 (QASP…TKPN), 1861 to 1894 (SVGQ…NSVG), and 1943 to 1966 (SATS…SINQ). Residues 2125 to 2136 (QQPSNLQPQQQS) show a composition bias toward low complexity. Polar residues predominate over residues 2137-2160 (VHPNMTQQPQQTPLNGHPSMVNTL). The span at 2161-2211 (QQQPPQQSLPMQTIQSQQQQHNQMPIISQQQQQQILMQQQQQQGSQQGSQQ) shows a compositional bias: low complexity. A compositionally biased stretch (polar residues) spans 2212 to 2229 (FNLPGTQQTHPQHQFIQS).

Belongs to the protein kinase superfamily. Ser/Thr protein kinase family. WNK subfamily. Mg(2+) is required as a cofactor. Post-translationally, autophosphorylated. Autophosphorylation at Ser-628 and Ser-632 promotes its activity.

The protein resides in the cytoplasm. The enzyme catalyses L-seryl-[protein] + ATP = O-phospho-L-seryl-[protein] + ADP + H(+). It catalyses the reaction L-threonyl-[protein] + ATP = O-phospho-L-threonyl-[protein] + ADP + H(+). Its activity is regulated as follows. Activated in response to hyperosmotic stress: cell shrinkage promotes formation of a membraneless compartment that concentrates wnk-1 with its downstrem substrates. Activation requires autophosphorylation. Autophosphorylation and subsequent activation is inhibited by increases in intracellular Cl(-) or K(+). In terms of biological role, serine/threonine-protein kinase component of the WNK-SPAK/OSR1 kinase cascade, which plays an important role in the regulation of electrolyte homeostasis and regulatory volume increase in response to hyperosmotic stress. Wnk mediates regulatory volume increase in response to hyperosmotic stress by acting as a molecular crowding sensor, which senses cell shrinkage and mediates formation of a membraneless compartment by undergoing liquid-liquid phase separation. The membraneless compartment concentrates Wnk with its substrate Fray, promoting Wnk-dependent phosphorylation and activation of downstream kinase Fray. Following activation, Fray catalyzes phosphorylation of ion cotransporters Ncc69 and Irk1, regulating their activity. Phosphorylation of Na-K-Cl cotransporter Ncc69 promotes its activation and ion influx. Involved in circadian rhythms in small ventral lateral (sLNv) pacemaker neurons: in the morning, Wnk activity is repressed by high levels of intracellular chloride; in contrast Wnk activation in the evening promotes the activation of the inwardly rectifying potassium channel Irk1 via Fray. Acts as a positive regulator of the canonical Wnt signaling pathway during wing disk development. The chain is Serine/threonine-protein kinase Wnk from Drosophila melanogaster (Fruit fly).